The following is a 450-amino-acid chain: Trigger factor (450 aa).

One can recognise a PPIase FKBP-type domain in the interval 163 to 249; sequence EDFVLIDYQG…LKEIQEQILP (87 aa). The segment covering 431–443 has biased composition (acidic residues); it reads PEVETEVSESAAD. The segment at 431 to 450 is disordered; sequence PEVETEVSESAADVEDKTDQ.

This sequence belongs to the FKBP-type PPIase family. Tig subfamily.

It localises to the cytoplasm. The enzyme catalyses [protein]-peptidylproline (omega=180) = [protein]-peptidylproline (omega=0). Involved in protein export. Acts as a chaperone by maintaining the newly synthesized protein in an open conformation. Functions as a peptidyl-prolyl cis-trans isomerase. The sequence is that of Trigger factor from Desulforapulum autotrophicum (strain ATCC 43914 / DSM 3382 / VKM B-1955 / HRM2) (Desulfobacterium autotrophicum).